A 566-amino-acid polypeptide reads, in one-letter code: Probable F-box protein At5g39490 (566 aa).

The F-box domain occupies 8 to 54; that stretch reads ACLLLMLPEDIFVVISRFLSPSDICNLILCGKSLRALVDSEKTWLVQ. A disordered region spans residues 318–338; it reads LRKSSSSKNTTPSQSEIRHSN. Over residues 320-332 the composition is skewed to low complexity; sequence KSSSSKNTTPSQS.

The chain is Probable F-box protein At5g39490 from Arabidopsis thaliana (Mouse-ear cress).